A 459-amino-acid chain; its full sequence is UDP-N-acetylmuramate--L-alanine ligase (459 aa).

ATP is bound at residue 118–124 (GTHGKTT).

It belongs to the MurCDEF family.

The protein localises to the cytoplasm. It catalyses the reaction UDP-N-acetyl-alpha-D-muramate + L-alanine + ATP = UDP-N-acetyl-alpha-D-muramoyl-L-alanine + ADP + phosphate + H(+). It participates in cell wall biogenesis; peptidoglycan biosynthesis. Cell wall formation. The protein is UDP-N-acetylmuramate--L-alanine ligase of Lachnospira eligens (strain ATCC 27750 / DSM 3376 / VPI C15-48 / C15-B4) (Eubacterium eligens).